The chain runs to 619 residues: CLPTM1-like membrane protein cnrB (619 aa).

The disordered stretch occupies residues 1 to 21; sequence MNNQGGAVAANGQRPQAQQQQ. The segment covering 9-21 has biased composition (low complexity); that stretch reads AANGQRPQAQQQQ. The next 6 helical transmembrane spans lie at 26–46, 324–344, 360–380, 384–404, 445–465, and 474–496; these read IMGI…ASFA, WILG…FLAF, LSVK…LYLL, TSYM…WKLG, YLSW…LYYH, and VVSS…QLFI. The disordered stretch occupies residues 566-619; that stretch reads SEEAEEVQQQDKKEIKEKVEEREEEKQEEEEEEKEKEEESTSSSKVTKRKTKKV. The span at 574–590 shows a compositional bias: basic and acidic residues; sequence QQDKKEIKEKVEEREEE. Residues 591–605 show a composition bias toward acidic residues; it reads KQEEEEEEKEKEEES.

It belongs to the CLPTM1 family.

The protein localises to the membrane. This is CLPTM1-like membrane protein cnrB (cnrB) from Dictyostelium discoideum (Social amoeba).